A 114-amino-acid polypeptide reads, in one-letter code: Iron-sulfur cluster insertion protein ErpA (114 aa).

Iron-sulfur cluster is bound by residues C42, C106, and C108.

Belongs to the HesB/IscA family. In terms of assembly, homodimer. Iron-sulfur cluster serves as cofactor.

In terms of biological role, required for insertion of 4Fe-4S clusters for at least IspG. In Enterobacter sp. (strain 638), this protein is Iron-sulfur cluster insertion protein ErpA.